A 365-amino-acid chain; its full sequence is Aminomethyltransferase (365 aa).

The protein belongs to the GcvT family. In terms of assembly, the glycine cleavage system is composed of four proteins: P, T, L and H.

It carries out the reaction N(6)-[(R)-S(8)-aminomethyldihydrolipoyl]-L-lysyl-[protein] + (6S)-5,6,7,8-tetrahydrofolate = N(6)-[(R)-dihydrolipoyl]-L-lysyl-[protein] + (6R)-5,10-methylene-5,6,7,8-tetrahydrofolate + NH4(+). Its function is as follows. The glycine cleavage system catalyzes the degradation of glycine. This Yersinia pseudotuberculosis serotype O:1b (strain IP 31758) protein is Aminomethyltransferase.